We begin with the raw amino-acid sequence, 154 residues long: Ribonuclease H (154 aa).

An RNase H type-1 domain is found at 3–144 (ELPVVSIFTD…ADQLARDGVA (142 aa)). Residues aspartate 12, glutamate 50, aspartate 72, and aspartate 136 each contribute to the Mg(2+) site.

Belongs to the RNase H family. As to quaternary structure, monomer. Mg(2+) is required as a cofactor.

Its subcellular location is the cytoplasm. It carries out the reaction Endonucleolytic cleavage to 5'-phosphomonoester.. Endonuclease that specifically degrades the RNA of RNA-DNA hybrids. This is Ribonuclease H from Bradyrhizobium sp. (strain ORS 278).